The sequence spans 1399 residues: DNA-directed RNA polymerase subunit beta' (1399 aa).

Residues Cys-70, Cys-72, Cys-85, and Cys-88 each coordinate Zn(2+). Mg(2+) is bound by residues Asp-460, Asp-462, and Asp-464. Residues Cys-814, Cys-888, Cys-895, and Cys-898 each coordinate Zn(2+).

This sequence belongs to the RNA polymerase beta' chain family. The RNAP catalytic core consists of 2 alpha, 1 beta, 1 beta' and 1 omega subunit. When a sigma factor is associated with the core the holoenzyme is formed, which can initiate transcription. Requires Mg(2+) as cofactor. The cofactor is Zn(2+).

The catalysed reaction is RNA(n) + a ribonucleoside 5'-triphosphate = RNA(n+1) + diphosphate. Its function is as follows. DNA-dependent RNA polymerase catalyzes the transcription of DNA into RNA using the four ribonucleoside triphosphates as substrates. This Pseudomonas putida (strain W619) protein is DNA-directed RNA polymerase subunit beta'.